Here is a 155-residue protein sequence, read N- to C-terminus: Small ribosomal subunit protein uS7c (155 aa).

It belongs to the universal ribosomal protein uS7 family. Part of the 30S ribosomal subunit.

The protein resides in the plastid. It is found in the chloroplast. In terms of biological role, one of the primary rRNA binding proteins, it binds directly to 16S rRNA where it nucleates assembly of the head domain of the 30S subunit. The protein is Small ribosomal subunit protein uS7c (rps7) of Hydrastis canadensis (Goldenseal).